A 76-amino-acid polypeptide reads, in one-letter code: uncharacterized protein (76 aa).

This is an uncharacterized protein from Archaeoglobus fulgidus (strain ATCC 49558 / DSM 4304 / JCM 9628 / NBRC 100126 / VC-16).